A 207-amino-acid chain; its full sequence is FMN-dependent NADH:quinone oxidoreductase (207 aa).

Residue Ser10 participates in FMN binding.

Belongs to the azoreductase type 1 family. Homodimer. FMN is required as a cofactor.

It carries out the reaction 2 a quinone + NADH + H(+) = 2 a 1,4-benzosemiquinone + NAD(+). The catalysed reaction is N,N-dimethyl-1,4-phenylenediamine + anthranilate + 2 NAD(+) = 2-(4-dimethylaminophenyl)diazenylbenzoate + 2 NADH + 2 H(+). Quinone reductase that provides resistance to thiol-specific stress caused by electrophilic quinones. In terms of biological role, also exhibits azoreductase activity. Catalyzes the reductive cleavage of the azo bond in aromatic azo compounds to the corresponding amines. In Shouchella clausii (strain KSM-K16) (Alkalihalobacillus clausii), this protein is FMN-dependent NADH:quinone oxidoreductase.